A 71-amino-acid polypeptide reads, in one-letter code: Movement protein TGBp3 (71 aa).

Over 1–3 (MEA) the chain is Lumenal. The chain crosses the membrane as a helical span at residues 4–26 (GAYLNAIIFVLVATIIAVISVGL). Residues 27–71 (TQTEPCTIRITGESITVHACHLDSETIKALATLKPLSLERLSFHQ) are Cytoplasmic-facing.

This sequence belongs to the Tymovirales TGBp3 protein family.

The protein localises to the host endoplasmic reticulum membrane. Its function is as follows. Plays a role in viral cell-to-cell propagation, by facilitating genome transport to neighboring plant cells through plasmosdesmata. May induce the formation of granular vesicles derived from the Endoplasmic reticulum, which align on actin filaments. This Brassica campestris (Field mustard) protein is Movement protein TGBp3.